A 207-amino-acid polypeptide reads, in one-letter code: Ribonuclease HII (207 aa).

Residues 12–205 (GLVVGIDEVG…IRNMIEAEAH (194 aa)) form the RNase H type-2 domain. A divalent metal cation is bound by residues aspartate 18, glutamate 19, and aspartate 114.

This sequence belongs to the RNase HII family. The cofactor is Mn(2+). Requires Mg(2+) as cofactor.

It localises to the cytoplasm. The enzyme catalyses Endonucleolytic cleavage to 5'-phosphomonoester.. Functionally, endonuclease that specifically degrades the RNA of RNA-DNA hybrids. In Gluconobacter oxydans (strain 621H) (Gluconobacter suboxydans), this protein is Ribonuclease HII.